A 337-amino-acid chain; its full sequence is MSRINLLLLCGGGSAEHDISLMSANYFESSLAKSDQFSVLRVELDKLGQYRTAAGDECELTNNREIRFRDETKAPWPVDYVIPCIHGYPGETGDIQSYFNLIQLPYFGCESEASSNCFNKITAKMWFSALGIPNTPYIFLHQYDDEAISQAQTALANWGSIFIKAASQGSSVGCYKVDDSSKVAQVLKDAFGYAPYVVVEKTIKARELEVAVYEYNGEIVATLPGEIICDTNTFYTFDEKYAKSSKARTDVVAKDVSVELSEQIRAYAIKAFKGMKLRHLSRIDFFLTAENEILLNEINTFPGSTPISMFPKMLQNHGHDFTEYLSLVINNQLSAKD.

One can recognise an ATP-grasp domain in the interval 124 to 330; that stretch reads KMWFSALGIP…FTEYLSLVIN (207 aa). 154-209 is an ATP binding site; that stretch reads ALANWGSIFIKAASQGSSVGCYKVDDSSKVAQVLKDAFGYAPYVVVEKTIKARELE. Residues Asp284, Glu297, and Asn299 each coordinate Mg(2+).

This sequence belongs to the D-alanine--D-alanine ligase family. The cofactor is Mg(2+). Mn(2+) is required as a cofactor.

It localises to the cytoplasm. It catalyses the reaction 2 D-alanine + ATP = D-alanyl-D-alanine + ADP + phosphate + H(+). Its pathway is cell wall biogenesis; peptidoglycan biosynthesis. Functionally, cell wall formation. The sequence is that of D-alanine--D-alanine ligase from Shewanella sp. (strain W3-18-1).